The primary structure comprises 313 residues: tRNA dimethylallyltransferase (313 aa).

Position 10–17 (10–17 (GPTASGKT)) interacts with ATP. 12-17 (TASGKT) is a substrate binding site. 3 interaction with substrate tRNA regions span residues 35-38 (DSAM), 159-163 (QRIQR), and 240-245 (RCVGYR).

It belongs to the IPP transferase family. Monomer. Mg(2+) is required as a cofactor.

The catalysed reaction is adenosine(37) in tRNA + dimethylallyl diphosphate = N(6)-dimethylallyladenosine(37) in tRNA + diphosphate. In terms of biological role, catalyzes the transfer of a dimethylallyl group onto the adenine at position 37 in tRNAs that read codons beginning with uridine, leading to the formation of N6-(dimethylallyl)adenosine (i(6)A). The sequence is that of tRNA dimethylallyltransferase from Legionella pneumophila (strain Corby).